The primary structure comprises 53 residues: Metallothionein (53 aa).

This sequence belongs to the metallothionein superfamily. Type 14 family.

This protein complexes cadmium, zinc and copper. This chain is Metallothionein, found in Synechococcus sp.